The following is a 308-amino-acid chain: Growth/differentiation factor 15 (308 aa).

The first 29 residues, 1–29, serve as a signal peptide directing secretion; it reads MPGQELRTVNGSQMLLVLLVLSWLPHGGA. Residues 30–194 constitute a propeptide that is removed on maturation; sequence LSLAEASRAS…RPQAARGRRR (165 aa). Asparagine 70 carries an N-linked (GlcNAc...) asparagine glycan. The disordered stretch occupies residues 152–177; sequence APALHLRLSPPPSQSDQLLAESSSAR. Residues 165–177 show a composition bias toward polar residues; that stretch reads QSDQLLAESSSAR. 4 disulfides stabilise this stretch: cysteine 203–cysteine 210, cysteine 211–cysteine 274, cysteine 240–cysteine 305, and cysteine 244–cysteine 307.

It belongs to the TGF-beta family. Homodimer; disulfide-linked. Interacts with GFRAL and RET; ligand of GFRAL, which mediates GDF15 internalization and cellular signaling through interaction with RET via the formation of a 2:2:2 ternary complex composed of GDF15, GFRAL and RET. As to expression, detected in plasma (at protein level). Highly expressed in placenta, with lower levels in prostate and colon and some expression in kidney.

The protein localises to the secreted. Hormone produced in response to various stresses to confer information about those stresses to the brain, and trigger an aversive response, characterized by nausea, vomiting, and/or loss of appetite. The aversive response is both required to reduce continuing exposure to those stresses at the time of exposure and to promote avoidance behavior in the future. Acts by binding to its receptor, GFRAL, activating GFRAL-expressing neurons localized in the area postrema and nucleus tractus solitarius of the brainstem. It then triggers the activation of neurons localized within the parabrachial nucleus and central amygdala, which constitutes part of the 'emergency circuit' that shapes responses to stressful conditions. The GDF15-GFRAL signal induces expression of genes involved in metabolism, such as lipid metabolism in adipose tissues. Required for avoidance behavior in response to food allergens: induced downstream of mast cell activation to promote aversion and minimize harmful effects of exposure to noxious substances. In addition to suppress appetite, also promotes weight loss by enhancing energy expenditure in muscle: acts by increasing calcium futile cycling in muscle. Contributes to the effect of metformin, an anti-diabetic drug, on appetite reduction and weight loss: produced in the kidney in response to metformin treatment, thereby activating the GDF15-GFRAL response, leading to reduced appetite and weight. The contribution of GDF15 to weight loss following metformin treatment is however limited and subject to discussion. Produced in response to anticancer drugs, such as camptothecin or cisplatin, promoting nausea, vomiting and contributing to malnutrition. Overproduced in many cancers, promoting anorexia in cancer (cachexia). Responsible for the risk of nausea and vomiting during pregnancy: high levels of GDF15 during pregnancy, mostly originating from the fetus, are associated with increased nausea and vomiting. Maternal sensitivity to nausea is probably determined by pre-pregnancy exposure to GDF15, women with naturally high level of GDF15 being less susceptible to nausea than women with low levels of GDF15 before pregnancy. Promotes metabolic adaptation in response to systemic inflammation caused by bacterial and viral infections in order to promote tissue tolerance and prevent tissue damage. Required for tissue tolerance in response to myocardial infarction by acting as an inhibitor of leukocyte integring activation, thereby protecting against cardiac rupture. Inhibits growth hormone signaling on hepatocytes. The chain is Growth/differentiation factor 15 from Homo sapiens (Human).